Consider the following 312-residue polypeptide: Apolipoprotein E (312 aa).

The signal sequence occupies residues 1 to 18; sequence MKALWALLLVPLLTGCLA. Repeat copies occupy residues 72-93, 94-115, 116-137, 138-159, 160-181, 182-203, 204-225, and 226-247. Residues 72-247 are 8 X 22 AA approximate tandem repeats; it reads VLMEDTMTEV…RLEEVRDQME (176 aa). A Methionine sulfoxide modification is found at methionine 135. Serine 139 carries the phosphoserine modification. Positions 150–160 are LDL and other lipoprotein receptors binding; that stretch reads HLRKMRKRLMR. The segment at 150–160 is LDL receptor binding; the sequence is HLRKMRKRLMR. Residue 154–157 coordinates heparin; it reads MRKR. The tract at residues 202-282 is lipid-binding and lipoprotein association; sequence TANLGSGAAQ…GWFEPLVEDM (81 aa). 221 to 228 is a heparin binding site; it reads SDRIRGRL. A homooligomerization region spans residues 258-312; that stretch reads QQIRLQAEVFQARLKGWFEPLVEDMQRQWANLMEKIQASVATNSIASTTVPLENQ. Residues 270–282 are specificity for association with VLDL; the sequence is RLKGWFEPLVEDM.

Belongs to the apolipoprotein A1/A4/E family. In terms of assembly, homotetramer. May interact with ABCA1; functionally associated with ABCA1 in the biogenesis of HDLs. May interact with APP/A4 amyloid-beta peptide; the interaction is extremely stable in vitro but its physiological significance is unclear. May interact with MAPT. May interact with MAP2. In the cerebrospinal fluid, interacts with secreted SORL1. Interacts with PMEL; this allows the loading of PMEL luminal fragment on ILVs to induce fibril nucleation. APOE exists as multiple glycosylated and sialylated glycoforms within cells and in plasma. The extent of glycosylation and sialylation are tissue and context specific. In terms of processing, glycated in plasma VLDL. Post-translationally, phosphorylated by FAM20C in the extracellular medium.

The protein resides in the secreted. It is found in the extracellular space. It localises to the extracellular matrix. Its subcellular location is the extracellular vesicle. The protein localises to the endosome. The protein resides in the multivesicular body. Functionally, APOE is an apolipoprotein, a protein associating with lipid particles, that mainly functions in lipoprotein-mediated lipid transport between organs via the plasma and interstitial fluids. APOE is a core component of plasma lipoproteins and is involved in their production, conversion and clearance. Apolipoproteins are amphipathic molecules that interact both with lipids of the lipoprotein particle core and the aqueous environment of the plasma. As such, APOE associates with chylomicrons, chylomicron remnants, very low density lipoproteins (VLDL) and intermediate density lipoproteins (IDL) but shows a preferential binding to high-density lipoproteins (HDL). It also binds a wide range of cellular receptors including the LDL receptor/LDLR, the LDL receptor-related proteins LRP1, LRP2 and LRP8 and the very low-density lipoprotein receptor/VLDLR that mediate the cellular uptake of the APOE-containing lipoprotein particles. Finally, APOE also has a heparin-binding activity and binds heparan-sulfate proteoglycans on the surface of cells, a property that supports the capture and the receptor-mediated uptake of APOE-containing lipoproteins by cells. A main function of APOE is to mediate lipoprotein clearance through the uptake of chylomicrons, VLDLs, and HDLs by hepatocytes. APOE is also involved in the biosynthesis by the liver of VLDLs as well as their uptake by peripheral tissues ensuring the delivery of triglycerides and energy storage in muscle, heart and adipose tissues. By participating in the lipoprotein-mediated distribution of lipids among tissues, APOE plays a critical role in plasma and tissues lipid homeostasis. APOE is also involved in two steps of reverse cholesterol transport, the HDLs-mediated transport of cholesterol from peripheral tissues to the liver, and thereby plays an important role in cholesterol homeostasis. First, it is functionally associated with ABCA1 in the biogenesis of HDLs in tissues. Second, it is enriched in circulating HDLs and mediates their uptake by hepatocytes. APOE also plays an important role in lipid transport in the central nervous system, regulating neuron survival and sprouting. The protein is Apolipoprotein E (Apoe) of Rattus rattus (Black rat).